The primary structure comprises 440 residues: Chromosome partition protein MukF (440 aa).

The segment at 208–236 is leucine-zipper; sequence LDETSGNLRELQDTLNAAGDKLQSQLLRI.

The protein belongs to the MukF family. In terms of assembly, interacts, and probably forms a ternary complex, with MukE and MukB via its C-terminal region. The complex formation is stimulated by calcium or magnesium. It is required for an interaction between MukE and MukB.

Its subcellular location is the cytoplasm. The protein resides in the nucleoid. In terms of biological role, involved in chromosome condensation, segregation and cell cycle progression. May participate in facilitating chromosome segregation by condensation DNA from both sides of a centrally located replisome during cell division. Not required for mini-F plasmid partitioning. Probably acts via its interaction with MukB and MukE. Overexpression results in anucleate cells. It has a calcium binding activity. The protein is Chromosome partition protein MukF of Histophilus somni (strain 129Pt) (Haemophilus somnus).